Here is a 435-residue protein sequence, read N- to C-terminus: Glutamyl-tRNA reductase (435 aa).

Residues 50-53, serine 110, 115-117, and glutamine 121 each bind substrate; these read TCNR and ESQ. Catalysis depends on cysteine 51, which acts as the Nucleophile. 191 to 196 serves as a coordination point for NADP(+); it reads GAGDMG.

This sequence belongs to the glutamyl-tRNA reductase family. In terms of assembly, homodimer.

The enzyme catalyses (S)-4-amino-5-oxopentanoate + tRNA(Glu) + NADP(+) = L-glutamyl-tRNA(Glu) + NADPH + H(+). The protein operates within porphyrin-containing compound metabolism; protoporphyrin-IX biosynthesis; 5-aminolevulinate from L-glutamyl-tRNA(Glu): step 1/2. Catalyzes the NADPH-dependent reduction of glutamyl-tRNA(Glu) to glutamate 1-semialdehyde (GSA). In Sulfurovum sp. (strain NBC37-1), this protein is Glutamyl-tRNA reductase.